The sequence spans 406 residues: MIFPSVKEQLDIIVNNTVEVISTDELERKLTKSLKNGTPLKIKLGADPSRPDLHLGHSVVLRKLREFQDLGHEAILIIGDFTAMIGDPSGKSKTRPQLTAEEARENGKSYFEQASKILDPEKTTICYNADWLSQMHFADVIRLSSHYTVARMLERDDFEKRYRSQTPISIHEFLYPLAQGMDSVHLKNDVELGGTDQKFNLLVGRDLQREYGIEPQVCITMPLLVGTDGSEKMSKSLGNAICFNDTPEDMYGRTLSIPDSLIETYWNLLVPHHSGNDKPIAERIAADPRETKRELARELVAQYYSAEEAAKAQEHFDRVIVNKQAPTDLPTVEFEEATMPVVELLMALAAFPSKNEARRMIQQGAVQAGNEKISDINAVIELTENPVIIRAGKRKFFKVARAKKSF.

Residues 48 to 57 (PSRPDLHLGH) carry the 'HIGH' region motif. Residues 232–236 (KMSKS) carry the 'KMSKS' region motif. Residue Lys-235 participates in ATP binding. The 63-residue stretch at 339–401 (MPVVELLMAL…GKRKFFKVAR (63 aa)) folds into the S4 RNA-binding domain.

It belongs to the class-I aminoacyl-tRNA synthetase family. TyrS type 2 subfamily. As to quaternary structure, homodimer.

The protein localises to the cytoplasm. The enzyme catalyses tRNA(Tyr) + L-tyrosine + ATP = L-tyrosyl-tRNA(Tyr) + AMP + diphosphate + H(+). Catalyzes the attachment of tyrosine to tRNA(Tyr) in a two-step reaction: tyrosine is first activated by ATP to form Tyr-AMP and then transferred to the acceptor end of tRNA(Tyr). This chain is Tyrosine--tRNA ligase, found in Chlorobaculum tepidum (strain ATCC 49652 / DSM 12025 / NBRC 103806 / TLS) (Chlorobium tepidum).